Reading from the N-terminus, the 198-residue chain is Cyclin-dependent kinase inhibitor 1B (198 aa).

A compositionally biased stretch (polar residues) spans Met1–Pro11. The tract at residues Met1–Gly34 is disordered. Ser10 carries the post-translational modification Phosphoserine; by UHMK1. Residues Glu14–Lys25 show a composition bias toward basic and acidic residues. The tract at residues Asp51 to Pro91 is interaction with CDK2. Phosphotyrosine; by SRC is present on Tyr74. Positions Pro85–Thr198 are disordered. Residue Tyr88 is modified to Phosphotyrosine; by ABL, LYN, SRC and JAK2. Phosphotyrosine is present on Tyr89. A compositionally biased stretch (basic and acidic residues) spans Glu126–Pro137. The Nuclear localization signal motif lies at Lys153–Arg169. At Thr157 the chain carries Phosphothreonine; by CaMK1, PKB/AKT1 and PIM1. Thr170 bears the Phosphothreonine mark. Residues Ser175–Gln186 show a composition bias toward polar residues. At Thr187 the chain carries Phosphothreonine; by PKB/AKT1, CDK1 and CDK2. Phosphothreonine; by CaMK1, PKB/AKT1, RPS6KA1, RPS6KA3 and PIM1 is present on Thr198.

This sequence belongs to the CDI family. As to quaternary structure, forms a ternary complex composed of CCNE1, CDK2 and CDKN1B. Interacts directly with CCNE1; the interaction is inhibited by CDK2-dependent phosphorylation on Thr-187. Interacts with COPS5, subunit of the COP9 signalosome complex; the interaction leads to CDKN1B degradation. Interacts with NUP50; the interaction leads to nuclear import and degradation of phosphorylated CDKN1B. Interacts with CCND1 and SNX6. Interacts (Thr-198-phosphorylated form) with 14-3-3 proteins, binds strongly YWHAQ, weakly YWHAE and YWHAH, but not YWHAB nor YWHAZ; the interaction with YWHAQ results in translocation to the cytoplasm. Interacts with AKT1 and LYN; the interactions lead to cytoplasmic mislocation, phosphorylation of CDKN1B and inhibition of cell cycle arrest. Forms a ternary complex with CCNA2 and CDK2; CDKN1B inhibits the kinase activity of CDK2 through conformational rearrangements. Interacts (unphosphorylated form) with CDK2. Forms a complex with CDK2 and SPDYA, but does not directly interact with SPDYA. Forms a ternary complex composed of cyclin D, CDK4 and CDKN1B. Interacts (phosphorylated on Tyr-88 and Tyr-89) with CDK4; the interaction is required for cyclin D and CDK4 complex assembly, induces nuclear translocation and activates the CDK4 kinase activity. Interacts with GRB2. Interacts with PIM1. Identified in a complex with SKP1, SKP2 and CKS1B. Interacts with UHMK1; the interaction leads to cytoplasmic mislocation, phosphorylation of CDKN1B and inhibition of cell cycle arrest. Also interacts with CDK1. Dephosphorylated on Thr-187 by PPM1H, leading to CDKN1B stability. Interacts with HSPA8; the interaction may be associated with susceptibility to ubiquitination. Phosphorylated; phosphorylation occurs on serine, threonine and tyrosine residues. Phosphorylation on Ser-10 is the major site of phosphorylation in resting cells, takes place at the G(0)-G(1) phase and leads to protein stability. Phosphorylation on other sites is greatly enhanced by mitogens, growth factors, cMYC and in certain cancer cell lines. The phosphorylated form found in the cytoplasm is inactivate. Phosphorylation on Thr-198 is required for interaction with 14-3-3 proteins. Phosphorylation on Thr-187, by CDK1 and CDK2 leads to protein ubiquitination and proteasomal degradation. Tyrosine phosphorylation promotes this process. Phosphorylation by PKB/AKT1 can be suppressed by LY294002, an inhibitor of the catalytic subunit of PI3K. Phosphorylation on Tyr-88 and Tyr-89 has no effect on binding CDK2, but is required for binding CDK4. Dephosphorylated on tyrosine residues by G-CSF. Post-translationally, ubiquitinated; in the cytoplasm by the KPC complex (composed of RNF123/KPC1 and UBAC1/KPC2) and, in the nucleus, by SCF(SKP2). The latter requires prior phosphorylation on Thr-187. Ubiquitinated; by a TRIM21-containing SCF(SKP2)-like complex; leads to its degradation. In terms of processing, subject to degradation in the lysosome. Interaction with SNX6 promotes lysosomal degradation. As to expression, expressed in kidney (at protein level). Expressed in all tissues tested. Highest levels in skeletal muscle, lowest in liver and kidney.

The protein localises to the nucleus. Its subcellular location is the cytoplasm. The protein resides in the endosome. Functionally, important regulator of cell cycle progression. Inhibits the kinase activity of CDK2 bound to cyclin A, but has little inhibitory activity on CDK2 bound to SPDYA. Involved in G1 arrest. Potent inhibitor of cyclin E- and cyclin A-CDK2 complexes. Forms a complex with cyclin type D-CDK4 complexes and is involved in the assembly, stability, and modulation of CCND1-CDK4 complex activation. Acts either as an inhibitor or an activator of cyclin type D-CDK4 complexes depending on its phosphorylation state and/or stoichometry. The chain is Cyclin-dependent kinase inhibitor 1B from Homo sapiens (Human).